Here is a 249-residue protein sequence, read N- to C-terminus: ATP synthase subunit a (249 aa).

The next 6 helical transmembrane spans lie at 33–53 (YMLI…AQLV), 83–103 (FFPL…IGII), 113–133 (LIVT…YGVA), 139–159 (FFSI…VMFI), 188–208 (VFAG…WVGG), and 216–236 (VALY…FAIL).

The protein belongs to the ATPase A chain family. In terms of assembly, F-type ATPases have 2 components, CF(1) - the catalytic core - and CF(0) - the membrane proton channel. CF(1) has five subunits: alpha(3), beta(3), gamma(1), delta(1), epsilon(1). CF(0) has three main subunits: a(1), b(2) and c(9-12). The alpha and beta chains form an alternating ring which encloses part of the gamma chain. CF(1) is attached to CF(0) by a central stalk formed by the gamma and epsilon chains, while a peripheral stalk is formed by the delta and b chains.

The protein resides in the cell inner membrane. Functionally, key component of the proton channel; it plays a direct role in the translocation of protons across the membrane. This chain is ATP synthase subunit a, found in Bradyrhizobium diazoefficiens (strain JCM 10833 / BCRC 13528 / IAM 13628 / NBRC 14792 / USDA 110).